The following is a 124-amino-acid chain: UPF0231 protein SO_3983 (124 aa).

The protein belongs to the UPF0231 family.

In Shewanella oneidensis (strain ATCC 700550 / JCM 31522 / CIP 106686 / LMG 19005 / NCIMB 14063 / MR-1), this protein is UPF0231 protein SO_3983.